The sequence spans 254 residues: 3-deoxy-manno-octulosonate cytidylyltransferase (254 aa).

It belongs to the KdsB family.

The protein resides in the cytoplasm. It catalyses the reaction 3-deoxy-alpha-D-manno-oct-2-ulosonate + CTP = CMP-3-deoxy-beta-D-manno-octulosonate + diphosphate. The protein operates within nucleotide-sugar biosynthesis; CMP-3-deoxy-D-manno-octulosonate biosynthesis; CMP-3-deoxy-D-manno-octulosonate from 3-deoxy-D-manno-octulosonate and CTP: step 1/1. It participates in bacterial outer membrane biogenesis; lipopolysaccharide biosynthesis. Functionally, activates KDO (a required 8-carbon sugar) for incorporation into bacterial lipopolysaccharide in Gram-negative bacteria. The polypeptide is 3-deoxy-manno-octulosonate cytidylyltransferase (Chlamydia trachomatis serovar A (strain ATCC VR-571B / DSM 19440 / HAR-13)).